A 237-amino-acid polypeptide reads, in one-letter code: Ribonuclease 3 (237 aa).

The RNase III domain maps to 4–130 (IQILFQTLNI…LFGAIYLDLG (127 aa)). E45 is a Mg(2+) binding site. D49 is a catalytic residue. Mg(2+) contacts are provided by D116 and E119. E119 is an active-site residue. One can recognise a DRBM domain in the interval 154-222 (DFKTQLQEIV…AQQALSKVAK (69 aa)).

The protein belongs to the ribonuclease III family. In terms of assembly, homodimer. Requires Mg(2+) as cofactor.

It localises to the cytoplasm. The catalysed reaction is Endonucleolytic cleavage to 5'-phosphomonoester.. In terms of biological role, digests double-stranded RNA. Involved in the processing of primary rRNA transcript to yield the immediate precursors to the large and small rRNAs (23S and 16S). Processes some mRNAs, and tRNAs when they are encoded in the rRNA operon. Processes pre-crRNA and tracrRNA of type II CRISPR loci if present in the organism. The chain is Ribonuclease 3 from Aster yellows witches'-broom phytoplasma (strain AYWB).